A 606-amino-acid polypeptide reads, in one-letter code: Putative mitochondrial ATP-dependent helicase irc3 (606 aa).

In terms of domain architecture, Helicase ATP-binding spans 40-201 (NAFDEGKRRI…ACGLDEIVYH (162 aa)). 53–60 (LATGSGKT) contacts ATP. Positions 148-151 (DEVH) match the DEAH box motif. Residues 246–398 (QSEKAIFEIP…LSPDEVENFY (153 aa)) enclose the Helicase C-terminal domain.

This sequence belongs to the helicase family. IRC3 subfamily.

Its subcellular location is the mitochondrion. This is Putative mitochondrial ATP-dependent helicase irc3 (irc3) from Schizosaccharomyces pombe (strain 972 / ATCC 24843) (Fission yeast).